A 274-amino-acid polypeptide reads, in one-letter code: NADPH-dependent 7-cyano-7-deazaguanine reductase (274 aa).

Residue 80-82 (VES) participates in substrate binding. 82–83 (SK) is an NADPH binding site. C181 functions as the Thioimide intermediate in the catalytic mechanism. D188 functions as the Proton donor in the catalytic mechanism. 220-221 (HE) contributes to the substrate binding site. 249–250 (RG) serves as a coordination point for NADPH.

The protein belongs to the GTP cyclohydrolase I family. QueF type 2 subfamily. As to quaternary structure, homodimer.

It is found in the cytoplasm. The enzyme catalyses 7-aminomethyl-7-carbaguanine + 2 NADP(+) = 7-cyano-7-deazaguanine + 2 NADPH + 3 H(+). The protein operates within tRNA modification; tRNA-queuosine biosynthesis. Catalyzes the NADPH-dependent reduction of 7-cyano-7-deazaguanine (preQ0) to 7-aminomethyl-7-deazaguanine (preQ1). In Burkholderia mallei (strain NCTC 10247), this protein is NADPH-dependent 7-cyano-7-deazaguanine reductase.